Reading from the N-terminus, the 249-residue chain is Granaticin polyketide synthase putative ketoacyl reductase 2 (249 aa).

12 to 36 is a binding site for NAD(+); the sequence is LVTGSSSGIGQTVAQRLAAEGYRVV. S144 contributes to the substrate binding site. The active-site Proton acceptor is Y157.

The protein belongs to the short-chain dehydrogenases/reductases (SDR) family.

The protein operates within antibiotic biosynthesis; granaticin biosynthesis. This is Granaticin polyketide synthase putative ketoacyl reductase 2 (gra-orf6) from Streptomyces violaceoruber.